The primary structure comprises 419 residues: L-rhamnose isomerase (419 aa).

Mn(2+) contacts are provided by H262, D294, and D296.

It belongs to the rhamnose isomerase family. Homotetramer. It depends on Mn(2+) as a cofactor.

It localises to the cytoplasm. It carries out the reaction L-rhamnopyranose = L-rhamnulose. It functions in the pathway carbohydrate degradation; L-rhamnose degradation; glycerone phosphate from L-rhamnose: step 1/3. In terms of biological role, catalyzes the interconversion of L-rhamnose and L-rhamnulose. The chain is L-rhamnose isomerase from Escherichia coli (strain K12 / MC4100 / BW2952).